Reading from the N-terminus, the 273-residue chain is Undecaprenyl-diphosphatase (273 aa).

A run of 8 helical transmembrane segments spans residues 3 to 23, 48 to 68, 92 to 112, 116 to 136, 152 to 172, 193 to 213, 220 to 240, and 252 to 272; these read IVEI…EFAP, AANT…VVVF, MQVI…EDYI, LFST…MIAA, ITYK…WPGF, ADFT…LSLL, TIDA…FALI, and IRLV…YIVY.

The protein belongs to the UppP family.

It is found in the cell membrane. The catalysed reaction is di-trans,octa-cis-undecaprenyl diphosphate + H2O = di-trans,octa-cis-undecaprenyl phosphate + phosphate + H(+). Its function is as follows. Catalyzes the dephosphorylation of undecaprenyl diphosphate (UPP). Confers resistance to bacitracin. The protein is Undecaprenyl-diphosphatase of Geobacillus sp. (strain WCH70).